The chain runs to 256 residues: Type III pantothenate kinase (256 aa).

ATP is bound at residue 6–13 (DVGNSNIV). Residues Tyr-100 and 107-110 (GADR) each bind substrate. Asp-109 serves as the catalytic Proton acceptor. K(+) is bound at residue Asp-129. Thr-132 contacts ATP. Thr-184 is a binding site for substrate.

It belongs to the type III pantothenate kinase family. As to quaternary structure, homodimer. Requires NH4(+) as cofactor. The cofactor is K(+).

Its subcellular location is the cytoplasm. It carries out the reaction (R)-pantothenate + ATP = (R)-4'-phosphopantothenate + ADP + H(+). It participates in cofactor biosynthesis; coenzyme A biosynthesis; CoA from (R)-pantothenate: step 1/5. In terms of biological role, catalyzes the phosphorylation of pantothenate (Pan), the first step in CoA biosynthesis. This is Type III pantothenate kinase from Geotalea uraniireducens (strain Rf4) (Geobacter uraniireducens).